A 262-amino-acid polypeptide reads, in one-letter code: Type III pantothenate kinase (262 aa).

An ATP-binding site is contributed by 6 to 13; that stretch reads DVGNTNAV. Substrate is bound by residues Tyr100 and 107–110; that span reads GADR. The active-site Proton acceptor is Asp109. Asp129 lines the K(+) pocket. Thr132 provides a ligand contact to ATP. Residue Thr184 coordinates substrate.

Belongs to the type III pantothenate kinase family. As to quaternary structure, homodimer. The cofactor is NH4(+). K(+) serves as cofactor.

It is found in the cytoplasm. The catalysed reaction is (R)-pantothenate + ATP = (R)-4'-phosphopantothenate + ADP + H(+). It functions in the pathway cofactor biosynthesis; coenzyme A biosynthesis; CoA from (R)-pantothenate: step 1/5. Catalyzes the phosphorylation of pantothenate (Pan), the first step in CoA biosynthesis. The protein is Type III pantothenate kinase of Bacillus cereus (strain G9842).